We begin with the raw amino-acid sequence, 92 residues long: uncharacterized protein (92 aa).

To M.jannaschii MJ0782.1.

This is an uncharacterized protein from Methanothermobacter thermautotrophicus (strain ATCC 29096 / DSM 1053 / JCM 10044 / NBRC 100330 / Delta H) (Methanobacterium thermoautotrophicum).